The chain runs to 211 residues: Thiamine-phosphate synthase (211 aa).

4-amino-2-methyl-5-(diphosphooxymethyl)pyrimidine contacts are provided by residues 37–41 and Asn69; that span reads QLRIK. Residues Asp70 and Asp89 each coordinate Mg(2+). A 4-amino-2-methyl-5-(diphosphooxymethyl)pyrimidine-binding site is contributed by Ser108. 134-136 serves as a coordination point for 2-[(2R,5Z)-2-carboxy-4-methylthiazol-5(2H)-ylidene]ethyl phosphate; sequence TQT. Residue Lys137 coordinates 4-amino-2-methyl-5-(diphosphooxymethyl)pyrimidine. 2-[(2R,5Z)-2-carboxy-4-methylthiazol-5(2H)-ylidene]ethyl phosphate is bound by residues Gly166 and 186-187; that span reads VS.

It belongs to the thiamine-phosphate synthase family. It depends on Mg(2+) as a cofactor.

It carries out the reaction 2-[(2R,5Z)-2-carboxy-4-methylthiazol-5(2H)-ylidene]ethyl phosphate + 4-amino-2-methyl-5-(diphosphooxymethyl)pyrimidine + 2 H(+) = thiamine phosphate + CO2 + diphosphate. It catalyses the reaction 2-(2-carboxy-4-methylthiazol-5-yl)ethyl phosphate + 4-amino-2-methyl-5-(diphosphooxymethyl)pyrimidine + 2 H(+) = thiamine phosphate + CO2 + diphosphate. The catalysed reaction is 4-methyl-5-(2-phosphooxyethyl)-thiazole + 4-amino-2-methyl-5-(diphosphooxymethyl)pyrimidine + H(+) = thiamine phosphate + diphosphate. The protein operates within cofactor biosynthesis; thiamine diphosphate biosynthesis; thiamine phosphate from 4-amino-2-methyl-5-diphosphomethylpyrimidine and 4-methyl-5-(2-phosphoethyl)-thiazole: step 1/1. Condenses 4-methyl-5-(beta-hydroxyethyl)thiazole monophosphate (THZ-P) and 2-methyl-4-amino-5-hydroxymethyl pyrimidine pyrophosphate (HMP-PP) to form thiamine monophosphate (TMP). The polypeptide is Thiamine-phosphate synthase (Citrobacter koseri (strain ATCC BAA-895 / CDC 4225-83 / SGSC4696)).